The primary structure comprises 297 residues: Ribosomal RNA small subunit methyltransferase A (297 aa).

S-adenosyl-L-methionine is bound by residues asparagine 31, leucine 33, glycine 58, glutamate 79, aspartate 104, and asparagine 129.

This sequence belongs to the class I-like SAM-binding methyltransferase superfamily. rRNA adenine N(6)-methyltransferase family. RsmA subfamily.

Its subcellular location is the cytoplasm. The catalysed reaction is adenosine(1518)/adenosine(1519) in 16S rRNA + 4 S-adenosyl-L-methionine = N(6)-dimethyladenosine(1518)/N(6)-dimethyladenosine(1519) in 16S rRNA + 4 S-adenosyl-L-homocysteine + 4 H(+). Functionally, specifically dimethylates two adjacent adenosines (A1518 and A1519) in the loop of a conserved hairpin near the 3'-end of 16S rRNA in the 30S particle. May play a critical role in biogenesis of 30S subunits. The protein is Ribosomal RNA small subunit methyltransferase A of Staphylococcus aureus (strain MRSA252).